The primary structure comprises 987 residues: Ephrin type-B receptor 2 (987 aa).

The first 19 residues, 1-19 (MGPLWFCCLPLALLPLLAA), serve as a signal peptide directing secretion. The Extracellular portion of the chain corresponds to 20–544 (VEETLMDSTT…QTSVQEKLPL (525 aa)). The Eph LBD domain maps to 21–203 (EETLMDSTTA…FYRKCPRVIQ (183 aa)). Disulfide bonds link Cys-63–Cys-185 and Cys-98–Cys-108. Asn-266, Asn-337, Asn-429, Asn-478, and Asn-483 each carry an N-linked (GlcNAc...) asparagine glycan. Fibronectin type-III domains lie at 325 to 435 (IPSA…TNQA) and 436 to 531 (APSA…TMTE). The helical transmembrane segment at 545 to 565 (IIGSSAAGLVFLIAVVVIIIV) threads the bilayer. The Cytoplasmic segment spans residues 566 to 987 (CNRRGFERAD…QMNQIQSVEV (422 aa)). In terms of domain architecture, Protein kinase spans 622 to 885 (VKIEQVIGAG…QIVNTLDKMI (264 aa)). ATP is bound by residues 628–636 (IGAGEFGEV) and Lys-654. Asp-747 functions as the Proton acceptor in the catalytic mechanism. Lys-892 is covalently cross-linked (Glycyl lysine isopeptide (Lys-Gly) (interchain with G-Cter in ubiquitin)). An SAM domain is found at 914 to 978 (TSFNTVDEWL…LNSIQVMRAQ (65 aa)). Positions 985-987 (VEV) match the PDZ-binding motif.

The protein belongs to the protein kinase superfamily. Tyr protein kinase family. Ephrin receptor subfamily. Heterotetramer upon binding of the ligand. The heterotetramer is composed of an ephrin dimer and a receptor dimer. Oligomerization is probably required to induce biological responses. Ligand binding induces cleavage by matrix metalloproteinases (MMPs) such as MMP7/MMP9, producing an EphB2/N-terminal fragment (NTF) and a C-terminal long fragment (EphB2-LF). EphB2-LF is further cleaved by MMPs, producing EphB2/CTF1 which is further cleaved by the PS1/gamma-secretase producing EphB2/CTF2. Post-translationally, polyubiquitinated; ligand binding stimulates ubiquitination. Ubiquitinated by RNF186 at Lys-892, mainly through 'Lys-27'-linked polyubiquitin chains.

The protein localises to the cell membrane. Its subcellular location is the cell projection. It localises to the axon. It is found in the dendrite. The enzyme catalyses L-tyrosyl-[protein] + ATP = O-phospho-L-tyrosyl-[protein] + ADP + H(+). Its function is as follows. Receptor tyrosine kinase which binds promiscuously transmembrane ephrin-B family ligands residing on adjacent cells, leading to contact-dependent bidirectional signaling into neighboring cells. The signaling pathway downstream of the receptor is referred to as forward signaling while the signaling pathway downstream of the ephrin ligand is referred to as reverse signaling. Functions in axon guidance during development. In addition to axon guidance, also regulates dendritic spines development and maturation and stimulates the formation of excitatory synapses. The sequence is that of Ephrin type-B receptor 2 (EPHB2) from Coturnix japonica (Japanese quail).